Consider the following 102-residue polypeptide: Aspartyl/glutamyl-tRNA(Asn/Gln) amidotransferase subunit C (102 aa).

The protein belongs to the GatC family. Heterotrimer of A, B and C subunits.

It carries out the reaction L-glutamyl-tRNA(Gln) + L-glutamine + ATP + H2O = L-glutaminyl-tRNA(Gln) + L-glutamate + ADP + phosphate + H(+). The catalysed reaction is L-aspartyl-tRNA(Asn) + L-glutamine + ATP + H2O = L-asparaginyl-tRNA(Asn) + L-glutamate + ADP + phosphate + 2 H(+). Functionally, allows the formation of correctly charged Asn-tRNA(Asn) or Gln-tRNA(Gln) through the transamidation of misacylated Asp-tRNA(Asn) or Glu-tRNA(Gln) in organisms which lack either or both of asparaginyl-tRNA or glutaminyl-tRNA synthetases. The reaction takes place in the presence of glutamine and ATP through an activated phospho-Asp-tRNA(Asn) or phospho-Glu-tRNA(Gln). The polypeptide is Aspartyl/glutamyl-tRNA(Asn/Gln) amidotransferase subunit C (Mycobacteroides abscessus (strain ATCC 19977 / DSM 44196 / CCUG 20993 / CIP 104536 / JCM 13569 / NCTC 13031 / TMC 1543 / L948) (Mycobacterium abscessus)).